The sequence spans 260 residues: Segregation and condensation protein A (260 aa).

This sequence belongs to the ScpA family. Component of a cohesin-like complex composed of ScpA, ScpB and the Smc homodimer, in which ScpA and ScpB bind to the head domain of Smc. The presence of the three proteins is required for the association of the complex with DNA.

The protein resides in the cytoplasm. In terms of biological role, participates in chromosomal partition during cell division. May act via the formation of a condensin-like complex containing Smc and ScpB that pull DNA away from mid-cell into both cell halves. This chain is Segregation and condensation protein A, found in Halalkalibacterium halodurans (strain ATCC BAA-125 / DSM 18197 / FERM 7344 / JCM 9153 / C-125) (Bacillus halodurans).